Here is a 197-residue protein sequence, read N- to C-terminus: Protein GrpE (197 aa).

Basic and acidic residues predominate over residues 1-12 (MTDSDGKTDKSG). The segment at 1–35 (MTDSDGKTDKSGEPAAEVEPVVSKPYVMPDDPEDD) is disordered.

This sequence belongs to the GrpE family. Homodimer.

Its subcellular location is the cytoplasm. Participates actively in the response to hyperosmotic and heat shock by preventing the aggregation of stress-denatured proteins, in association with DnaK and GrpE. It is the nucleotide exchange factor for DnaK and may function as a thermosensor. Unfolded proteins bind initially to DnaJ; upon interaction with the DnaJ-bound protein, DnaK hydrolyzes its bound ATP, resulting in the formation of a stable complex. GrpE releases ADP from DnaK; ATP binding to DnaK triggers the release of the substrate protein, thus completing the reaction cycle. Several rounds of ATP-dependent interactions between DnaJ, DnaK and GrpE are required for fully efficient folding. This Nitrobacter winogradskyi (strain ATCC 25391 / DSM 10237 / CIP 104748 / NCIMB 11846 / Nb-255) protein is Protein GrpE.